A 957-amino-acid chain; its full sequence is Glycine dehydrogenase (decarboxylating) (957 aa).

Lysine 708 carries the post-translational modification N6-(pyridoxal phosphate)lysine.

The protein belongs to the GcvP family. As to quaternary structure, the glycine cleavage system is composed of four proteins: P, T, L and H. Pyridoxal 5'-phosphate is required as a cofactor.

It catalyses the reaction N(6)-[(R)-lipoyl]-L-lysyl-[glycine-cleavage complex H protein] + glycine + H(+) = N(6)-[(R)-S(8)-aminomethyldihydrolipoyl]-L-lysyl-[glycine-cleavage complex H protein] + CO2. The glycine cleavage system catalyzes the degradation of glycine. The P protein binds the alpha-amino group of glycine through its pyridoxal phosphate cofactor; CO(2) is released and the remaining methylamine moiety is then transferred to the lipoamide cofactor of the H protein. The polypeptide is Glycine dehydrogenase (decarboxylating) (Salmonella dublin (strain CT_02021853)).